We begin with the raw amino-acid sequence, 216 residues long: TATA-box-binding protein-like 1 (216 aa).

2 repeat units span residues lysine 38 to glycine 121 and phenylalanine 126 to glutamine 210.

This sequence belongs to the TBP family.

The protein resides in the nucleus. Its function is as follows. TATA box-binding transcription factor. Members of the TBP family are differentially required to regulate transcription and development during early embryogenesis. The polypeptide is TATA-box-binding protein-like 1 (trf1) (Entamoeba histolytica (strain ATCC 30459 / HM-1:IMSS / ABRM)).